A 1610-amino-acid polypeptide reads, in one-letter code: MATAAETEAPSTDASWKSRGGGGGDDGMKPALPELESSLQNGGGDGGGGAGPEETAAAEAARSYGHEQPQQTSEAAAAALPKGAEEPERPFRRSFQIPRKSREKKALFQPLTPGSREFEDVLNILHSSYLEPSSVTYFNYRRACLIHNELLEKEFTEKRRELKFDGRLDKELSESYAFLMVDRYQVQSICEKGLQVGQSKITVLGSPSMGIYLCRYADLLQANPLEAGAVGDVVIFKIMKGKIKSIYDPLSVKSLESMLSKNALDPTPKHECHVSKNASRITSLLAYRAYELTQYYFYEYGFDEVRRRPRHVCPYAVVSFTYKDDVQTPKFLSPLRSNSFNADRNIDKFNYTLWKGQLLNKGKLLCYISLRSANRAFLPVKLPEKLDVETVMSIDCLKQKIPPSFFYKDTYVGPNEVLKNGMYCSLYEVVEKTRIGSNMECLLQKLEKEKLVLVKPLGDRGYLFLLSPFQMVSPYEHQTVKSRILHALFLFQEPRCLIITQKGIMNTTPLEKPENLADILKITQFLQFSLIQCRKEFKTINTINFHSVVEKYVSEFFKRGFGSGKREFFMFSYDSRLDDRKFLYSAPRNKSHIDDCLHTYIYQPEMYQLSIFKLKELFEENWRRQQFSPLSDYEGQEEELNGSKMKFGKRNNSRDETTEPEQQKSSHSLDYDKDRVKELINLIQCTKKNVGGDPDPEDTKSKNVLKRKLEDLPENMRKFAKTSNSTESCHLYEESPQSIGLLGQDPNLRVQQEDSGNTGDIHKLYNWLSEALANARHSDGFLTETVNKALGLSSSGAYEELKQKCDYELNSTLDKKESEQPACTKIENVHFKDAQSPLLEVDAASVKYPPLLSSSEVGINHKLHCKEDPNLINVNNFEGCSLCPTVSIEHGFLRQHSKSNDDEETEIHWKLIPITGGNAGSPEDQHGKHGEKQTPDTLKGTTEEDTVTAGQAMAVEEQCVPAAELPRVSEITENTVLGEFHLFSRKVEEILKEKNVSYVSAISTPIFSAQEKMNRLSEFIHSNTSKAGVEEFVDGLHEKLNTVVITASAKGVSLPPAVSANHSHAAAALASLGRRVVSISSSDFSAKELFEPLCSEHLKDNNSNEQYSSSVEVEMNRPHHCKELMLTSDHTVPGDTVLEPTEKEITKSPSDITISAQPALSNFISQLEPEVFNSLVKIMKDVQKNTVKFYIHEEEESVLCKEIKEYLTKLGNTECHPDQFLERRSNLDKLLIIIQNEDIAGFIHKVPGLVTLKKLPCVSFAGVDSLDDVKNHTYNELFVSGGFIVSDESILNLEVVTIESLKIFLTFLEELSTPEGKWQWKIHCKFQKKLKELGRMNTKALSLLTLLNVYQKKHLVEILSYHSCDSQTRNAPEMDCLIRLQAQNIQQRHIVFLTEKNIKMVSSYTDNGIVVATTEDFMQNFTSLVGYHNSVTEESLPPLLGANENLESQSALLENDEKDEEDMSLDSGDEISHIEVFSNVHSEILAGETKGSSGTDQKKNIQIELQSSLDVQNSLLEDKTYLIDCEASAPIDRVCSEGESSNSAEQDAYSDFQADQNQLQMSHQCSHFNVLTHQTFLGTPYALSSTRSQENENYFLSAYKNSGTEKSPLS.

The interval 1–96 (MATAAETEAP…PERPFRRSFQ (96 aa)) is disordered. Position 2 is an N-acetylalanine (Ala2). The segment covering 41–51 (NGGGDGGGGAG) has biased composition (gly residues). Low complexity predominate over residues 52–61 (PEETAAAEAA). A Phosphoserine modification is found at Ser339. Lys581 is covalently cross-linked (Glycyl lysine isopeptide (Lys-Gly) (interchain with G-Cter in SUMO2)). Ser628, Ser631, and Ser668 each carry phosphoserine. Disordered regions lie at residues 631–671 (SDYE…SLDY) and 687–710 (KKNV…RKLE). Composition is skewed to basic and acidic residues over residues 652 to 671 (NSRD…SLDY) and 697 to 710 (EDTK…RKLE). The residue at position 793 (Ser793) is a Phosphoserine. Glycyl lysine isopeptide (Lys-Gly) (interchain with G-Cter in SUMO2) cross-links involve residues Lys816 and Lys825. At Ser836 the chain carries Phosphoserine. A Glycyl lysine isopeptide (Lys-Gly) (interchain with G-Cter in SUMO2) cross-link involves residue Lys866. Residues 915-941 (TGGNAGSPEDQHGKHGEKQTPDTLKGT) are disordered. Residues Ser921 and Lys928 each carry the phosphoserine modification. Residues 923–934 (EDQHGKHGEKQT) show a composition bias toward basic and acidic residues. Phosphothreonine is present on Thr1004. Phosphoserine occurs at positions 1059 and 1508.

This sequence belongs to the TASOR family. Component of the HUSH complex; at least composed of TASOR, PPHLN1 and MPHOSPH8. Interacts with MORC2; the interaction associateS MORC2 with the HUSH complex which recruits MORC2 to heterochromatic loci. Interacts with ZNF638; leading to recruitment of the HUSH complex to unintegrated retroviral DNA. Interacts with INPP5A, EML1, SV1L, GPSM2, ITGB3BP, CNTN1, ETFA, PSMD8, S100A10, MPHOSPH8, TMEM100, ALB, PARPBP, HCFC2, NCBP1 and SETDB1. In terms of tissue distribution, present in skin, brain and testis (at protein level). Ubiquitously expressed at low levels in the majority of the organs, expressed at higher levels in kidneys, spleen, thymus, seminal vesicles, uterus, and ovaries and its expression is almost six times higher in male tissues than in females. Highly expressed in seminiferous tubules with a strong signal in Sertoli cells, spermatogonia, and spermatocytes.

Its subcellular location is the nucleus. It localises to the chromosome. Its function is as follows. Component of the HUSH complex, a multiprotein complex that mediates epigenetic repression. The HUSH complex is recruited to genomic loci rich in H3K9me3 and is required to maintain transcriptional silencing by promoting recruitment of SETDB1, a histone methyltransferase that mediates further deposition of H3K9me3, as well as MORC2. Also represses L1 retrotransposons in collaboration with MORC2 and, probably, SETDB1, the silencing is dependent of repressive epigenetic modifications, such as H3K9me3 mark. Silencing events often occur within introns of transcriptionally active genes, and lead to the down-regulation of host gene expression. The HUSH complex is also involved in the silencing of unintegrated retroviral DNA by being recruited by ZNF638: some part of the retroviral DNA formed immediately after infection remains unintegrated in the host genome and is transcriptionally repressed. Plays a crucial role in early embryonic development. Involved in the organization of spindle poles and spindle apparatus assembly during zygotic division. Plays an important role in maintaining epiblast fitness or potency. The polypeptide is Protein TASOR (Mus musculus (Mouse)).